The primary structure comprises 697 residues: Potassium-transporting ATPase ATP-binding subunit (697 aa).

Helical transmembrane passes span 55–75, 79–99, 245–265, and 271–291; these read PIMF…FLPS, SIPG…VLFA, LTLI…YLGF, and VLVA…LSAI. The active-site 4-aspartylphosphate intermediate is the D324. ATP is bound by residues D361, E365, 393–400, and K412; that span reads FKAETRMS. The Mg(2+) site is built by D535 and D539. 3 helical membrane-spanning segments follow: residues 605–625, 633–653, and 677–697; these read FAII…LNIM, AILS…PLAM, and GGVI…GLFI.

Belongs to the cation transport ATPase (P-type) (TC 3.A.3) family. Type IA subfamily. The system is composed of three essential subunits: KdpA, KdpB and KdpC.

It is found in the cell membrane. It carries out the reaction K(+)(out) + ATP + H2O = K(+)(in) + ADP + phosphate + H(+). Part of the high-affinity ATP-driven potassium transport (or Kdp) system, which catalyzes the hydrolysis of ATP coupled with the electrogenic transport of potassium into the cytoplasm. This subunit is responsible for energy coupling to the transport system and for the release of the potassium ions to the cytoplasm. The chain is Potassium-transporting ATPase ATP-binding subunit from Bacillus anthracis (strain CDC 684 / NRRL 3495).